The chain runs to 585 residues: Sodium/calcium exchanger NCL (585 aa).

Helical transmembrane passes span 83–103 (VFLI…LSAG), 106–126 (LLLE…MLGA), 149–169 (VSVG…VIWG), 212–232 (IMAI…LGST), and 239–259 (VLIA…YQVF). EF-hand domains lie at 299 to 334 (PDEH…ISFE) and 339 to 374 (DKDD…WLIQ). Aspartate 312, asparagine 314, aspartate 316, histidine 318, glutamate 323, aspartate 352, aspartate 356, glutamine 358, and glutamate 363 together coordinate Ca(2+). A run of 2 helical transmembrane segments spans residues 427–447 (WITI…AAFA) and 457–477 (FSAA…PLAT). The N-linked (GlcNAc...) asparagine glycan is linked to asparagine 478. 3 consecutive transmembrane segments (helical) span residues 505 to 525 (CGGV…IVYV), 532 to 552 (FSSE…FASF), and 558 to 578 (LWTC…VYIL).

It belongs to the Ca(2+):cation antiporter (CaCA) (TC 2.A.19) family. In terms of tissue distribution, expressed in roots, leaves, stems, petals, stamens, ovules and siliques.

Its subcellular location is the cell membrane. The protein localises to the vacuole membrane. Possesses sodium/calcium exchanger (NCX) activity when expressed in a heterologous mammalian CHO-K1 cell system. Does not possess cation/proton exchanger (CAX) or sodium/proton (NHX) activity when expressed in a heterologous yeast cell system. Has the ability to bind calcium in vitro. Participates in the maintenance of calcium homeostasis. May play a role in auxin response, diurnal rhythm and flowering time. Involved in salt stress response. In Arabidopsis thaliana (Mouse-ear cress), this protein is Sodium/calcium exchanger NCL.